We begin with the raw amino-acid sequence, 865 residues long: Aconitate hydratase B (865 aa).

Substrate is bound by residues R191, 244-246 (SSR), 414-416 (QDT), and S498. The [4Fe-4S] cluster site is built by C710, C769, and C772. 2 residues coordinate substrate: R791 and R796.

Belongs to the aconitase/IPM isomerase family. Monomer. AcnB can also form a homodimer. The monomer-homodimer transition is dependent on iron availability and the carboxymethylation of C-273 inhibits the dimer formation. It depends on [4Fe-4S] cluster as a cofactor.

It catalyses the reaction citrate = D-threo-isocitrate. The catalysed reaction is (2S,3R)-3-hydroxybutane-1,2,3-tricarboxylate = 2-methyl-cis-aconitate + H2O. It participates in organic acid metabolism; propanoate degradation. Its pathway is carbohydrate metabolism; tricarboxylic acid cycle; isocitrate from oxaloacetate: step 2/2. Its function is as follows. Involved in the catabolism of short chain fatty acids (SCFA) via the tricarboxylic acid (TCA)(acetyl degradation route) and the 2-methylcitrate cycle I (propionate degradation route). Catalyzes the reversible isomerization of citrate to isocitrate via cis-aconitate. Also catalyzes the hydration of 2-methyl-cis-aconitate to yield (2R,3S)-2-methylisocitrate. The apo form of AcnB functions as a RNA-binding regulatory protein. During oxidative stress inactive AcnB apo-enzyme without iron sulfur clusters binds the acnB mRNA 3' UTRs (untranslated regions), stabilizes acnB mRNA and increases AcnB synthesis, thus mediating a post-transcriptional positive autoregulatory switch. AcnB also decreases the stability of the sodA transcript. This Escherichia coli (strain K12) protein is Aconitate hydratase B.